Consider the following 225-residue polypeptide: Urease accessory protein UreG (225 aa).

25–32 (GPVGAGKT) contacts GTP.

The protein belongs to the SIMIBI class G3E GTPase family. UreG subfamily. Homodimer. UreD, UreF and UreG form a complex that acts as a GTP-hydrolysis-dependent molecular chaperone, activating the urease apoprotein by helping to assemble the nickel containing metallocenter of UreC. The UreE protein probably delivers the nickel.

Its subcellular location is the cytoplasm. Its function is as follows. Facilitates the functional incorporation of the urease nickel metallocenter. This process requires GTP hydrolysis, probably effectuated by UreG. In Haemophilus influenzae (strain 86-028NP), this protein is Urease accessory protein UreG.